The chain runs to 1175 residues: Topoisomerase 1-associated factor 1 (1175 aa).

2 disordered regions span residues 894–982 (NYQS…DDEK) and 1043–1175 (SDGD…DDEE). The span at 910 to 921 (AKKRNSRKKSTK) shows a compositional bias: basic residues. A compositionally biased stretch (acidic residues) spans 930–940 (GDSDDDDDDAD). A compositionally biased stretch (basic and acidic residues) spans 954-966 (PRDLLFEEPKPLR). Residues 1044–1053 (DGDDDDDDGN) show a composition bias toward acidic residues. The segment covering 1078 to 1096 (ILDSVQSQVLDNGSSQGNF) has biased composition (polar residues). Acidic residues predominate over residues 1137 to 1156 (EEDDNADEDEDEDEDVDGEE).

This sequence belongs to the timeless family. As to quaternary structure, component of the fork protection complex (FPC) consisting of TOF1 and CSM3.

Its subcellular location is the nucleus. Its function is as follows. Forms a fork protection complex (FPC) with CSM3 and which is required for chromosome segregation during meiosis and DNA damage repair. FPC coordinates leading and lagging strand synthesis and moves with the replication fork. FPC stabilizes replication forks in a configuration that is recognized by replication checkpoint sensors. The chain is Topoisomerase 1-associated factor 1 (TOF1) from Lodderomyces elongisporus (strain ATCC 11503 / CBS 2605 / JCM 1781 / NBRC 1676 / NRRL YB-4239) (Yeast).